The sequence spans 74 residues: U3-agatoxin-Ao1g (74 aa).

The N-terminal stretch at 1-20 is a signal peptide; it reads MRAIISLLLISTMVFGVIEA. Residues 21–34 constitute a propeptide that is removed on maturation; that stretch reads VSVEEGLKIFEGER. Intrachain disulfides connect C37–C53, C44–C58, C52–C68, and C60–C66. Position 72 is an asparagine amide (N72).

Belongs to the neurotoxin 07 (Beta/delta-agtx) family. 03 (aga-4) subfamily. Aga sub-subfamily. As to expression, expressed by the venom gland.

It is found in the secreted. Its function is as follows. Insecticidal neurotoxin that modulates the insect Nav channel (DmNaV1/tipE (para/tipE)) in a unique manner, with both the activation and inactivation processes being affected. The voltage dependence of activation is shifted toward more hyperpolarized potentials (analogous to site 4 toxins) and a non-inactivating persistent sodium current is induced (site 3-like action). Interestingly, both effects take place in a voltage-dependent manner, producing a bell-shaped curve between -80 and 0 mV. This Agelena orientalis (Funnel-web spider) protein is U3-agatoxin-Ao1g.